A 414-amino-acid chain; its full sequence is Probable sugar phosphate/phosphate translocator At1g06470 (414 aa).

The next 9 helical transmembrane spans lie at 72–92 (VLKTLFFILVWYTFSTFLTLY), 101–121 (LGKFPAPLLMNTIHFSIQAVL), 172–192 (TFATMCKSAAPIFLLLFAFAF), 197–217 (PSLKLFGIISVISAGVLLTVA), 224–244 (FWGFVFVMLAAVMSGFRWCMT), 259–279 (FIFMSCVAPVMAIATGLLSLL), 303–323 (FLMLFGGALAFCMVLTEYVLV), 328–348 (AVTVTIAGVVKEAVTIVVAVF), and 354–374 (FTWLKGVGLMIIMVGVSLFNW). The region spanning 106–216 (APLLMNTIHF…VISAGVLLTV (111 aa)) is the EamA domain.

The protein belongs to the TPT transporter family. TPT (TC 2.A.7.9) subfamily.

It is found in the membrane. This Arabidopsis thaliana (Mouse-ear cress) protein is Probable sugar phosphate/phosphate translocator At1g06470.